The following is a 449-amino-acid chain: Capsid protein (449 aa).

The tract at residues 1 to 43 (MARRARRPRGRFYAFRRGRWHHLKRLRRRYKFRHRRRQRYRRR) is DNA-binding. A nuclear localization signals region spans residues 6-47 (RRPRGRFYAFRRGRWHHLKRLRRRYKFRHRRRQRYRRRAFRK).

The protein belongs to the gyrovirus capsid protein family. Homomultimer (Potential). Interacts with Rep; this interaction relocates Rep into the nucleus.

The protein localises to the host nucleus. It is found in the virion. Its function is as follows. Self-assembles to form the virion icosahedral capsid with a T=1 symmetry. This very small capsid (25 nm in diameter) allows the virus to be very stable in the environment and resistant to some disinfectants, including detergents. Essential for the initial attachment to host receptors. After attachment, the virus is endocytosed and traffics to the nucleus. The capsid protein binds and transports the viral genome and Rep across the nuclear envelope. This chain is Capsid protein (VP1), found in Chicken anemia virus (isolate Australia) (CAV).